The sequence spans 463 residues: Regulator of microtubule dynamics protein 3 (463 aa).

The Mitochondrial intermembrane portion of the chain corresponds to methionine 1–leucine 4. The chain crosses the membrane as a helical span at residues isoleucine 5–valine 27. Topologically, residues phenylalanine 28–valine 463 are cytoplasmic. The short motif at isoleucine 146–serine 161 is the FFAT element. Positions glycine 153–cysteine 192 are disordered. Basic and acidic residues predominate over residues aspartate 173 to glutamate 183. The stretch at alanine 279–lysine 302 forms a coiled coil.

Belongs to the RMDN family. In terms of assembly, interacts with PTPN2. Interacts with microtubules. Interacts with VAPB. Interacts (FFAT motif) with MOSPD2 (via MSP domain).

The protein resides in the mitochondrion outer membrane. Its subcellular location is the cytoplasm. The protein localises to the nucleus. It is found in the cytoskeleton. It localises to the spindle. The protein resides in the spindle pole. In terms of biological role, involved in cellular calcium homeostasis regulation. The protein is Regulator of microtubule dynamics protein 3 (rmdn3) of Xenopus laevis (African clawed frog).